The chain runs to 383 residues: Putative F-box/kelch-repeat protein At1g62270 (383 aa).

The F-box domain occupies 6 to 51; sequence TSSFSSLPWDLVEDILARVPATSLKRLRSTCKQWNFLFNDQIFTKM. 3 Kelch repeats span residues 110 to 158, 160 to 211, and 349 to 383; these read KVFH…YGNY, SCYN…LRGN, and TVYI…LVQI.

In Arabidopsis thaliana (Mouse-ear cress), this protein is Putative F-box/kelch-repeat protein At1g62270.